A 143-amino-acid polypeptide reads, in one-letter code: Large ribosomal subunit protein uL11 (143 aa).

This sequence belongs to the universal ribosomal protein uL11 family. Part of the ribosomal stalk of the 50S ribosomal subunit. Interacts with L10 and the large rRNA to form the base of the stalk. L10 forms an elongated spine to which L12 dimers bind in a sequential fashion forming a multimeric L10(L12)X complex. Post-translationally, one or more lysine residues are methylated.

In terms of biological role, forms part of the ribosomal stalk which helps the ribosome interact with GTP-bound translation factors. The sequence is that of Large ribosomal subunit protein uL11 from Borreliella afzelii (strain PKo) (Borrelia afzelii).